Consider the following 368-residue polypeptide: Queuine tRNA-ribosyltransferase (368 aa).

Catalysis depends on Asp89, which acts as the Proton acceptor. Residues 89-93 (DSGGF), Asp143, Gln187, and Gly214 each bind substrate. Catalysis depends on Asp264, which acts as the Nucleophile. Residues 269–273 (TRNAR) are RNA binding; important for wobble base 34 recognition. Zn(2+) is bound by residues Cys302, Cys304, Cys307, and His333.

The protein belongs to the queuine tRNA-ribosyltransferase family. As to quaternary structure, homodimer. Within each dimer, one monomer is responsible for RNA recognition and catalysis, while the other monomer binds to the replacement base PreQ1. The cofactor is Zn(2+).

The enzyme catalyses 7-aminomethyl-7-carbaguanine + guanosine(34) in tRNA = 7-aminomethyl-7-carbaguanosine(34) in tRNA + guanine. It participates in tRNA modification; tRNA-queuosine biosynthesis. Catalyzes the base-exchange of a guanine (G) residue with the queuine precursor 7-aminomethyl-7-deazaguanine (PreQ1) at position 34 (anticodon wobble position) in tRNAs with GU(N) anticodons (tRNA-Asp, -Asn, -His and -Tyr). Catalysis occurs through a double-displacement mechanism. The nucleophile active site attacks the C1' of nucleotide 34 to detach the guanine base from the RNA, forming a covalent enzyme-RNA intermediate. The proton acceptor active site deprotonates the incoming PreQ1, allowing a nucleophilic attack on the C1' of the ribose to form the product. After dissociation, two additional enzymatic reactions on the tRNA convert PreQ1 to queuine (Q), resulting in the hypermodified nucleoside queuosine (7-(((4,5-cis-dihydroxy-2-cyclopenten-1-yl)amino)methyl)-7-deazaguanosine). The sequence is that of Queuine tRNA-ribosyltransferase from Blochmanniella pennsylvanica (strain BPEN).